The primary structure comprises 273 residues: MNNRVHQGHLARKRFGQNFLNDQFVIDSIVSAINPQKGQAMVEIGPGLAALTEPVGERLDQLTVIELDRDLAARLQTHPFLGPKLTIYQQDAMTFNFGELAEKMGQPLHVFGNLPYNISTPLMFHLFSYTDAIADMHFMLQKEVVNRLVAGPNSKVYGRLSVMAQYYCNVIPVLEVPPSAFTPPPKVDSAVVRLVPHATMPHPVKDVRVLSRITTEAFNQRRKTIRNSLGNLFSVEVLTGMGIDPAMRAENISVAQYCQMANYLAENAPLQES.

Residues Asn-18, Leu-20, Gly-45, Glu-66, Asp-91, and Asn-113 each coordinate S-adenosyl-L-methionine.

It belongs to the class I-like SAM-binding methyltransferase superfamily. rRNA adenine N(6)-methyltransferase family. RsmA subfamily.

It localises to the cytoplasm. The catalysed reaction is adenosine(1518)/adenosine(1519) in 16S rRNA + 4 S-adenosyl-L-methionine = N(6)-dimethyladenosine(1518)/N(6)-dimethyladenosine(1519) in 16S rRNA + 4 S-adenosyl-L-homocysteine + 4 H(+). Specifically dimethylates two adjacent adenosines (A1518 and A1519) in the loop of a conserved hairpin near the 3'-end of 16S rRNA in the 30S particle. May play a critical role in biogenesis of 30S subunits. This chain is Ribosomal RNA small subunit methyltransferase A, found in Shigella dysenteriae serotype 1 (strain Sd197).